We begin with the raw amino-acid sequence, 312 residues long: Probable myosin light chain kinase DDB_G0282429 (312 aa).

A disordered region spans residues 1 to 28 (MDRMDSSDEEIDNISDDELQSGDEIEVE). Positions 7 to 27 (SDEEIDNISDDELQSGDEIEV) are enriched in acidic residues. A Protein kinase domain is found at 38-290 (YILGNEIGRG…FEQCLIHPWV (253 aa)). ATP contacts are provided by residues 44-52 (IGRGAFSIV) and Lys-67. The active-site Proton acceptor is Asp-158.

Belongs to the protein kinase superfamily. CAMK Ser/Thr protein kinase family. CaMK subfamily.

The catalysed reaction is L-seryl-[myosin light chain] + ATP = O-phospho-L-seryl-[myosin light chain] + ADP + H(+). It carries out the reaction L-threonyl-[myosin light chain] + ATP = O-phospho-L-threonyl-[myosin light chain] + ADP + H(+). Its activity is regulated as follows. Does not have a calmodulin-binding domain. May phosphorylate a specific serine in the N-terminus of a myosin light chain. This chain is Probable myosin light chain kinase DDB_G0282429, found in Dictyostelium discoideum (Social amoeba).